Here is a 104-residue protein sequence, read N- to C-terminus: Small ribosomal subunit protein uS10 (104 aa).

Belongs to the universal ribosomal protein uS10 family. As to quaternary structure, part of the 30S ribosomal subunit.

Its function is as follows. Involved in the binding of tRNA to the ribosomes. The chain is Small ribosomal subunit protein uS10 from Ralstonia nicotianae (strain ATCC BAA-1114 / GMI1000) (Ralstonia solanacearum).